Here is a 416-residue protein sequence, read N- to C-terminus: Gamma-glutamyl phosphate reductase (416 aa).

It belongs to the gamma-glutamyl phosphate reductase family.

It localises to the cytoplasm. The catalysed reaction is L-glutamate 5-semialdehyde + phosphate + NADP(+) = L-glutamyl 5-phosphate + NADPH + H(+). It participates in amino-acid biosynthesis; L-proline biosynthesis; L-glutamate 5-semialdehyde from L-glutamate: step 2/2. In terms of biological role, catalyzes the NADPH-dependent reduction of L-glutamate 5-phosphate into L-glutamate 5-semialdehyde and phosphate. The product spontaneously undergoes cyclization to form 1-pyrroline-5-carboxylate. The chain is Gamma-glutamyl phosphate reductase from Vibrio vulnificus (strain CMCP6).